We begin with the raw amino-acid sequence, 429 residues long: Large ribosomal subunit protein mL37 (429 aa).

A mitochondrion-targeting transit peptide spans 1–29 (MALRPVVLRRAPAHSRGILTRPGPPRPRG). The disordered stretch occupies residues 12–45 (PAHSRGILTRPGPPRPRGPLPRTPWTTRGPPPDQ). Residues 22 to 33 (PGPPRPRGPLPR) show a composition bias toward pro residues.

It belongs to the mitochondrion-specific ribosomal protein mL37 family. Component of the mitochondrial ribosome large subunit (39S) which comprises a 16S rRNA and about 50 distinct proteins.

Its subcellular location is the mitochondrion. The chain is Large ribosomal subunit protein mL37 (MRPL37) from Gallus gallus (Chicken).